Consider the following 377-residue polypeptide: Nitric oxide reductase FlRd-NAD(+) reductase (377 aa).

This sequence belongs to the FAD-dependent oxidoreductase family. Requires FAD as cofactor.

Its subcellular location is the cytoplasm. The enzyme catalyses 2 reduced [nitric oxide reductase rubredoxin domain] + NAD(+) + H(+) = 2 oxidized [nitric oxide reductase rubredoxin domain] + NADH. The protein operates within nitrogen metabolism; nitric oxide reduction. Functionally, one of at least two accessory proteins for anaerobic nitric oxide (NO) reductase. Reduces the rubredoxin moiety of NO reductase. This is Nitric oxide reductase FlRd-NAD(+) reductase from Klebsiella pneumoniae subsp. pneumoniae (strain ATCC 700721 / MGH 78578).